We begin with the raw amino-acid sequence, 147 residues long: Small ribosomal subunit protein uS12 (147 aa).

The protein belongs to the universal ribosomal protein uS12 family. As to quaternary structure, part of the 30S ribosomal subunit.

Functionally, with S4 and S5 plays an important role in translational accuracy. Located at the interface of the 30S and 50S subunits. The chain is Small ribosomal subunit protein uS12 from Pyrobaculum arsenaticum (strain DSM 13514 / JCM 11321 / PZ6).